The chain runs to 185 residues: Ribosome maturation factor RimM (185 aa).

The PRC barrel domain maps to 105–184; the sequence is KDEYYWKDII…IVVVDWEIYK (80 aa).

Belongs to the RimM family. Binds ribosomal protein uS19.

Its subcellular location is the cytoplasm. Its function is as follows. An accessory protein needed during the final step in the assembly of 30S ribosomal subunit, possibly for assembly of the head region. Essential for efficient processing of 16S rRNA. May be needed both before and after RbfA during the maturation of 16S rRNA. It has affinity for free ribosomal 30S subunits but not for 70S ribosomes. This chain is Ribosome maturation factor RimM, found in Blochmanniella floridana.